Reading from the N-terminus, the 416-residue chain is UDP-N-acetylglucosamine 1-carboxyvinyltransferase (416 aa).

Residue 22-23 (KN) coordinates phosphoenolpyruvate. A UDP-N-acetyl-alpha-D-glucosamine-binding site is contributed by R91. The active-site Proton donor is the C115. The residue at position 115 (C115) is a 2-(S-cysteinyl)pyruvic acid O-phosphothioketal. UDP-N-acetyl-alpha-D-glucosamine is bound by residues 120–124 (RPIDL), D305, and I327.

The protein belongs to the EPSP synthase family. MurA subfamily.

The protein localises to the cytoplasm. The enzyme catalyses phosphoenolpyruvate + UDP-N-acetyl-alpha-D-glucosamine = UDP-N-acetyl-3-O-(1-carboxyvinyl)-alpha-D-glucosamine + phosphate. It functions in the pathway cell wall biogenesis; peptidoglycan biosynthesis. Functionally, cell wall formation. Adds enolpyruvyl to UDP-N-acetylglucosamine. The chain is UDP-N-acetylglucosamine 1-carboxyvinyltransferase from Buchnera aphidicola subsp. Acyrthosiphon pisum (strain Tuc7).